The chain runs to 163 residues: Deoxyuridine 5'-triphosphate nucleotidohydrolase (163 aa).

Substrate-binding positions include R78–G80, N91, and T95–D97. A compositionally biased stretch (basic and acidic residues) spans E140–D151. The interval E140 to P163 is disordered.

The protein belongs to the dUTPase family. It depends on Mg(2+) as a cofactor.

The enzyme catalyses dUTP + H2O = dUMP + diphosphate + H(+). The protein operates within pyrimidine metabolism; dUMP biosynthesis; dUMP from dCTP (dUTP route): step 2/2. In terms of biological role, this enzyme is involved in nucleotide metabolism: it produces dUMP, the immediate precursor of thymidine nucleotides and it decreases the intracellular concentration of dUTP so that uracil cannot be incorporated into DNA. This Heliobacterium modesticaldum (strain ATCC 51547 / Ice1) protein is Deoxyuridine 5'-triphosphate nucleotidohydrolase.